The chain runs to 332 residues: L-lactate dehydrogenase A chain (332 aa).

Residues 29–57 and Arg-99 contribute to the NAD(+) site; that span reads GMVGMASAISILLKDLCDELALVDVMEDK. Positions 106, 138, and 169 each coordinate substrate. Asn-138 provides a ligand contact to NAD(+). Residue His-193 is the Proton acceptor of the active site. Residue Thr-248 participates in substrate binding.

The protein belongs to the LDH/MDH superfamily. LDH family. As to quaternary structure, homotetramer.

It localises to the cytoplasm. The enzyme catalyses (S)-lactate + NAD(+) = pyruvate + NADH + H(+). The protein operates within fermentation; pyruvate fermentation to lactate; (S)-lactate from pyruvate: step 1/1. Functionally, interconverts simultaneously and stereospecifically pyruvate and lactate with concomitant interconversion of NADH and NAD(+). The chain is L-lactate dehydrogenase A chain (ldha) from Rhinogobiops nicholsii (Blackeye goby).